The primary structure comprises 420 residues: Type II methyltransferase M.HgiCI (420 aa).

One can recognise an SAM-dependent MTase C5-type domain in the interval 2–417; it reads LKFIDLFAGI…LDLFKSADLA (416 aa). Residue Cys75 is part of the active site.

It belongs to the class I-like SAM-binding methyltransferase superfamily. C5-methyltransferase family.

The enzyme catalyses a 2'-deoxycytidine in DNA + S-adenosyl-L-methionine = a 5-methyl-2'-deoxycytidine in DNA + S-adenosyl-L-homocysteine + H(+). Its function is as follows. A methylase that recognizes the double-stranded sequence 5'-GGYRCC-3', methylates C-5 on both strands, and protects the DNA from cleavage by the HgiCI endonuclease. The polypeptide is Type II methyltransferase M.HgiCI (hgiCIM) (Herpetosiphon aurantiacus (Herpetosiphon giganteus)).